Here is a 605-residue protein sequence, read N- to C-terminus: Adenine deaminase (605 aa).

It belongs to the metallo-dependent hydrolases superfamily. Adenine deaminase family. Mn(2+) serves as cofactor.

The enzyme catalyses adenine + H2O + H(+) = hypoxanthine + NH4(+). The chain is Adenine deaminase from Mesorhizobium japonicum (strain LMG 29417 / CECT 9101 / MAFF 303099) (Mesorhizobium loti (strain MAFF 303099)).